The sequence spans 338 residues: S-adenosylmethionine:tRNA ribosyltransferase-isomerase (338 aa).

It belongs to the QueA family. As to quaternary structure, monomer.

The protein localises to the cytoplasm. It carries out the reaction 7-aminomethyl-7-carbaguanosine(34) in tRNA + S-adenosyl-L-methionine = epoxyqueuosine(34) in tRNA + adenine + L-methionine + 2 H(+). Its pathway is tRNA modification; tRNA-queuosine biosynthesis. In terms of biological role, transfers and isomerizes the ribose moiety from AdoMet to the 7-aminomethyl group of 7-deazaguanine (preQ1-tRNA) to give epoxyqueuosine (oQ-tRNA). The chain is S-adenosylmethionine:tRNA ribosyltransferase-isomerase from Francisella tularensis subsp. tularensis (strain WY96-3418).